We begin with the raw amino-acid sequence, 365 residues long: 3-amino-4-hydroxybenzoate 4-O-methyltransferase (365 aa).

A compositionally biased stretch (polar residues) spans 1 to 18; the sequence is MTVPENAQHTAPDQTQHT. The interval 1-32 is disordered; the sequence is MTVPENAQHTAPDQTQHTAPDRTRQAQQAAPD. Residues D227, 253–255, and R270 contribute to the S-adenosyl-L-methionine site; that span reads GDF. H273 functions as the Proton acceptor in the catalytic mechanism.

This sequence belongs to the class I-like SAM-binding methyltransferase superfamily. Cation-independent O-methyltransferase family.

It catalyses the reaction 3-amino-2,4-dihydroxybenzoate + S-adenosyl-L-methionine = 3-amino-2-hydroxy-4-methoxybenzoate + S-adenosyl-L-homocysteine + H(+). Its pathway is antibiotic biosynthesis. Part of a gene cluster involved in the biosynthesis of cremeomycin, a light-sensitive o-diazoquinone with antibacterial and antiproliferative effects. Catalyzes the methylation of the C4 hydroxyl group of 3-amino-2,4-dihydroxybenzoate (3,2,4-ADHBA) to form 3-amino-2-hydroxy-4-methoxybenzoate (3,2,4-AHMBA). In vitro, can also catalyze the methylation of 3-amino-4-hydroxybenzoate (3,4-AHBA). This Streptomyces cremeus protein is 3-amino-4-hydroxybenzoate 4-O-methyltransferase.